Here is a 749-residue protein sequence, read N- to C-terminus: 5-methyltetrahydropteroyltriglutamate--homocysteine methyltransferase (749 aa).

Residues 15-18 (RELK) and Lys-114 contribute to the 5-methyltetrahydropteroyltri-L-glutamate site. L-homocysteine is bound by residues 425 to 427 (IGS) and Glu-478. L-methionine-binding positions include 425–427 (IGS) and Glu-478. Trp-555 contacts 5-methyltetrahydropteroyltri-L-glutamate. Residue Asp-593 participates in L-homocysteine binding. Asp-593 is an L-methionine binding site. Glu-599 contacts 5-methyltetrahydropteroyltri-L-glutamate. The Zn(2+) site is built by His-636, Cys-638, and Glu-660. Residue His-689 is the Proton donor of the active site. Zn(2+) is bound at residue Cys-721.

Belongs to the vitamin-B12 independent methionine synthase family. Requires Zn(2+) as cofactor.

The enzyme catalyses 5-methyltetrahydropteroyltri-L-glutamate + L-homocysteine = tetrahydropteroyltri-L-glutamate + L-methionine. Its pathway is amino-acid biosynthesis; L-methionine biosynthesis via de novo pathway; L-methionine from L-homocysteine (MetE route): step 1/1. Catalyzes the transfer of a methyl group from 5-methyltetrahydrofolate to homocysteine resulting in methionine formation. The polypeptide is 5-methyltetrahydropteroyltriglutamate--homocysteine methyltransferase (Streptococcus suis (strain 05ZYH33)).